A 197-amino-acid polypeptide reads, in one-letter code: 7-methyl-GTP pyrophosphatase (197 aa).

Aspartate 72 acts as the Proton acceptor in catalysis.

The protein belongs to the Maf family. YceF subfamily. A divalent metal cation serves as cofactor.

The protein localises to the cytoplasm. The enzyme catalyses N(7)-methyl-GTP + H2O = N(7)-methyl-GMP + diphosphate + H(+). Functionally, nucleoside triphosphate pyrophosphatase that hydrolyzes 7-methyl-GTP (m(7)GTP). May have a dual role in cell division arrest and in preventing the incorporation of modified nucleotides into cellular nucleic acids. The sequence is that of 7-methyl-GTP pyrophosphatase from Bordetella avium (strain 197N).